The primary structure comprises 613 residues: 9-cis-epoxycarotenoid dioxygenase NCED5, chloroplastic (613 aa).

Residues 1–15 are compositionally biased toward polar residues; the sequence is MPTTFTPNSPASSCS. The N-terminal 36 residues, 1-36, are a transit peptide targeting the chloroplast; that stretch reads MPTTFTPNSPASSCSIHHRASPSRGARNSVRFTRPR. Positions 1–62 are disordered; that stretch reads MPTTFTPNSP…PPAYVPPPPP (62 aa). The segment covering 37 to 50 has biased composition (low complexity); sequence AAAAATNSVLSAPS. The segment covering 51–62 has biased composition (pro residues); the sequence is SVPPAYVPPPPP. Fe cation contacts are provided by His-305, His-354, His-419, and His-600.

It belongs to the carotenoid oxygenase family. Fe(2+) is required as a cofactor.

The protein resides in the plastid. The protein localises to the chloroplast. It carries out the reaction a 9-cis-epoxycarotenoid + O2 = a 12'-apo-carotenal + 2-cis,4-trans-xanthoxin. It catalyses the reaction 9-cis-violaxanthin + O2 = (3S,5R,6S)-5,6-epoxy-3-hydroxy-5,6-dihydro-12'-apo-beta-caroten-12'-al + 2-cis,4-trans-xanthoxin. The catalysed reaction is 9'-cis-neoxanthin + O2 = (3S,5R,6R)-3,5-dihydroxy-6,7-didehydro-5,6-dihydro-12'-apo-beta-caroten-12'-al + 2-cis,4-trans-xanthoxin. Functionally, has a 11,12(11',12') 9-cis epoxycarotenoid cleavage activity. Catalyzes the first step of abscisic-acid biosynthesis from carotenoids. This Oryza sativa subsp. japonica (Rice) protein is 9-cis-epoxycarotenoid dioxygenase NCED5, chloroplastic.